A 237-amino-acid polypeptide reads, in one-letter code: Ubiquinone biosynthesis O-methyltransferase (237 aa).

S-adenosyl-L-methionine contacts are provided by R39, G59, D80, and M124.

This sequence belongs to the methyltransferase superfamily. UbiG/COQ3 family.

It catalyses the reaction a 3-demethylubiquinol + S-adenosyl-L-methionine = a ubiquinol + S-adenosyl-L-homocysteine + H(+). The enzyme catalyses a 3-(all-trans-polyprenyl)benzene-1,2-diol + S-adenosyl-L-methionine = a 2-methoxy-6-(all-trans-polyprenyl)phenol + S-adenosyl-L-homocysteine + H(+). The protein operates within cofactor biosynthesis; ubiquinone biosynthesis. In terms of biological role, O-methyltransferase that catalyzes the 2 O-methylation steps in the ubiquinone biosynthetic pathway. This Vibrio atlanticus (strain LGP32) (Vibrio splendidus (strain Mel32)) protein is Ubiquinone biosynthesis O-methyltransferase.